The chain runs to 150 residues: DNA-directed RNA polymerases I, II, and III subunit RPABC3 (150 aa).

Ala-2 carries the N-acetylalanine modification.

Belongs to the eukaryotic RPB8 RNA polymerase subunit family. As to quaternary structure, component of the RNA polymerase I (Pol I), RNA polymerase II (Pol II) and RNA polymerase III (Pol III) complexes consisting of at least 13, 12 and 17 subunits, respectively. Pol I complex consists of a ten-subunit catalytic core composed of POLR1A/RPA1, POLR1B/RPA2, POLR1C/RPAC1, POLR1D/RPAC2, POLR1H/RPA12, POLR2E/RPABC1, POLR2F/RPABC2, POLR2H/RPABC3, POLR2K/RPABC4 and POLR2L/RPABC5; a mobile stalk subunit POLR1F/RPA43 protruding from the core and additional subunits homologous to general transcription factors POLR1E/RPA49 and POLR1G/RPA34. Part of Pol I pre-initiation complex (PIC), in which Pol I core assembles with RRN3 and promoter-bound UTBF and SL1/TIF-IB complex. Pol II complex contains a ten-subunit catalytic core composed of POLR2A/RPB1, POLR2B/RPB2, POLR2C/RPB3, POLR2I/RPB9, POLR2J/RPB11, POLR2E/RPABC1, POLR2F/RPABC2, POLR2H/RPABC3, POLR2K/RPABC4 and POLR2L/RPABC5 and a mobile stalk composed of two subunits POLR2D/RPB4 and POLR2G/RPB7. Part of Pol II(G) complex, in which Pol II core associates with an additional subunit POLR2M; unlike conventional Pol II, Pol II(G) functions as a transcriptional repressor. Part of Pol II pre-initiation complex (PIC), in which Pol II core assembles with Mediator, general transcription factors and other specific initiation factors including GTF2E1, GTF2E2, GTF2F1, GTF2F2, TCEA1, ERCC2, ERCC3, GTF2H2, GTF2H3, GTF2H4, GTF2H5, GTF2A1, GTF2A2, GTF2B and TBP; this large multi-subunit PIC complex mediates DNA unwinding and targets Pol II core to the transcription start site where the first phosphodiester bond forms. Directly interacts with POLR2A. Pol III complex consists of a ten-subunit catalytic core composed of POLR3A/RPC1, POLR3B/RPC2, POLR1C/RPAC1, POLR1D/RPAC2, POLR3K/RPC10, POLR2E/RPABC1, POLR2F/RPABC2, POLR2H/RPABC3, POLR2K/RPABC4 and POLR2L/RPABC5; a mobile stalk composed of two subunits POLR3H/RPC8 and CRCP/RPC9, protruding from the core and functioning primarily in transcription initiation; and additional subunits homologous to general transcription factors of the RNA polymerase II machinery, POLR3C/RPC3-POLR3F/RPC6-POLR3G/RPC7 heterotrimer required for transcription initiation and POLR3D/RPC4-POLR3E/RPC5 heterodimer involved in both transcription initiation and termination.

Its subcellular location is the nucleus. The protein localises to the nucleolus. DNA-dependent RNA polymerase catalyzes the transcription of DNA into RNA using the four ribonucleoside triphosphates as substrates. Common component of RNA polymerases I, II and III which synthesize ribosomal RNA precursors, mRNA precursors and many functional non-coding RNAs, and small RNAs, such as 5S rRNA and tRNAs, respectively. The sequence is that of DNA-directed RNA polymerases I, II, and III subunit RPABC3 (POLR2H) from Bos taurus (Bovine).